Consider the following 198-residue polypeptide: Small ribosomal subunit protein uS4c (198 aa).

The S4 RNA-binding domain occupies 85–145 (LRLDATIFRL…PKKFTIILIC (61 aa)).

It belongs to the universal ribosomal protein uS4 family. In terms of assembly, part of the 30S ribosomal subunit.

It localises to the plastid. The protein localises to the apicoplast. Functionally, one of the primary rRNA binding proteins, it binds directly to 16S rRNA where it nucleates assembly of the body of the 30S subunit. This chain is Small ribosomal subunit protein uS4c (rps4), found in Toxoplasma gondii.